The chain runs to 142 residues: Putative pre-16S rRNA nuclease (142 aa).

This sequence belongs to the YqgF nuclease family.

It localises to the cytoplasm. Could be a nuclease involved in processing of the 5'-end of pre-16S rRNA. This chain is Putative pre-16S rRNA nuclease, found in Azotobacter vinelandii (strain DJ / ATCC BAA-1303).